Consider the following 200-residue polypeptide: Nucleoplasmin (200 aa).

Ala-2 carries the post-translational modification N-acetylalanine. A Phosphoserine modification is found at Ser-3. Thr-4 is subject to Phosphothreonine. Residue Ser-6 is modified to Phosphoserine. Thr-8 carries the phosphothreonine modification. Residues 35 to 39 form an acidic tract A1 region; that stretch reads EDDEE. Positions 123–148 are enriched in acidic residues; the sequence is DYSWAEEEDEGEAEGEEEEEEEEDQE. The disordered stretch occupies residues 123–200; the sequence is DYSWAEEEDE…GRGRKPAAKK (78 aa). The segment at 128–148 is acidic tract A2; that stretch reads EEEDEGEAEGEEEEEEEEDQE. Ser-149 bears the Phosphoserine mark. Residues 153–170 show a composition bias toward basic residues; that stretch reads AVKRPAATKKAGQAKKKK. The Bipartite nuclear localization signal signature appears at 155-170; that stretch reads KRPAATKKAGQAKKKK. The acidic tract A3 stretch occupies residues 174 to 176; it reads EDE. 3 positions are modified to phosphoserine: Ser-177, Ser-178, and Ser-182. A compositionally biased stretch (basic residues) spans 185–200; the sequence is KKGKGAGRGRKPAAKK. Position 192 is an omega-N-methylarginine; by PRMT5; alternate (Arg-192). A Symmetric dimethylarginine; by PRMT5; alternate modification is found at Arg-192.

This sequence belongs to the nucleoplasmin family. As to quaternary structure, homopentamer, when bound to H2A-H2B dimers only. Homodecamer of two stacked pentamers, when bound to H2A-H2B dimers and H3-H4 tetramers simultaneously. Interacts with the heterotetramer formed by wdr77 and prmt5. Post-translationally, activated by phosphorylation of multiple serine/threonine residues, along both core and tail domains. The level of phosphorylation gradually increases during egg maturation, reaching an average of 7-10 phosphates per monomer, so that at the time of fertilization the activity of the protein is maximum. Methylated by prmt5, yielding both monomethylated and symmetrically dimethylated Arg-192.

The protein localises to the nucleus. Acts as a chaperone for histones, such as histone H2A-H2B, and thus regulates the assembly of nucleosome cores. Involved in chromatin remodeling, especially during fertilization and early embryonic development. May be involved in sperm chromatin decondensation during fertilization. The chain is Nucleoplasmin from Xenopus laevis (African clawed frog).